Consider the following 301-residue polypeptide: Thiosulfate sulfurtransferase (301 aa).

2 Rhodanese domains span residues 31-138 (GSPG…DTSY) and 171-289 (QSGG…MPIE). The Cysteine persulfide intermediate role is filled by C248. R253 contributes to the substrate binding site.

It carries out the reaction thiosulfate + hydrogen cyanide = thiocyanate + sulfite + 2 H(+). The protein is Thiosulfate sulfurtransferase (thtR) of Corynebacterium glutamicum (strain ATCC 13032 / DSM 20300 / JCM 1318 / BCRC 11384 / CCUG 27702 / LMG 3730 / NBRC 12168 / NCIMB 10025 / NRRL B-2784 / 534).